The primary structure comprises 1406 residues: MKDLLDIMQSPTSNGNHEFDSIQITLASPDVIKSWSHGEVKKPETINYRTFKPERDGLFCAKIFGPVKDFECLCGKYKRRKFQGVICEKCGVEVTTAKVRRDRMGHIDLASPVAHIWFLKSLPSRIGLLLDMTLRDIERVLYFESYIVTEPGLTSLEKYQLLDDEDYYKALEEFGDEFTAKMGAEAVQDLLKDIDLDLEIDELREAIPQTGSETKLKKMSKRLKLLEAFRNSNNKPEWMVMNILPVLPPDLRPLVPLEGGRFATSDLNDLYRRVINRNNRLKRLLELSAPDIIVRNEKRMLQESVDALLDNGRRGRAITGSNKRPLKSLADMIKGKQGRFRQNLLGKRVDYSGRSVIVVGPTLRLHQCGLPKKMALELFKPFTYNKLLSHGLATTIKAAKKMVEREEPQVWDMLAMVIREHPVLLNRAPTLHRLGLQAFEPVLIEGKAIQLHPLVCTAFNADFDGDQMAVHVPLTLEAQLESRALMMSTNNILSPANGEPIIVPSQDVVLGLYYISRSSVNAKGEGMIFATVNEALRAIGSNDLHVNAKIKVRVTETHIDDDGNRTKETSIKDTVAGRLLIWNIMPVGMSFDECNEEMTKKNISKLINSCYRKVGVKESVMFADQLMYLGFAQATLSGVSIGIDDMVIPPLKKQIIEVAEAEVREIEDQFEQGFVTAGERYNKVVDIWSRTNDKVAKAMMDNLATDKIINAKGEEEEQKSFNSIFIMSDSGARGSAAQIRQLAGMRGLMAKPDGSIIETPIKANFREGLTVLQYFISTHGARKGLADTALKTANSGYLTRRLVDVAQDLVITSDDCGTEQGLLMKPHIQGGEIIEKLGELVLGRVTARDVTYNDDAEKILIPAGTLIDEHWVKVLDNNAIDDIWARSVITCEIEHGVCSQCYGRDLARGHKVNIGESVGVMAAQSIGEPGTQLTMRTFHVGGAASSASVDNSISVRSAGQAHFENMKTVQHTDGHLVIVSRSAEIALTDELGRERERYKVPYGSSVLIKDEEQVEGGQTIAKWDPHTHPIITEFAGTARFSEITDGLTATVKVDDATGMSSFEILATRDRSSSAKDLRPAIILNTDEGKEVIYFLPAETIIRVSDGEKVAAGSILGRVPQASSGTKDITGGLPRVADLFEARRPKDHAIMAEMSGVVSFGKETKGKNRFIITNEDGEIHEELIPKWRQINVFENETVARGEVIADGPQNPHDILRLKGQTALADYIVNEVQDVYRLQGVKINDKHIEVIIRQMLRKVEITDGGDSNHFKGDQVEYADIKALNAKLEAEDKFPVQFERQLLGITKASLATESFISAASFQETTRVLTAAAVTGKVDELRGLKENVVVGRLIPAGTGLAYHKARKEKAEQKLQDKDLNAAFDMSATTDSKDFASFDEAFAQELNQGNH.

Zn(2+) contacts are provided by Cys72, Cys74, Cys87, and Cys90. Mg(2+) contacts are provided by Asp462, Asp464, and Asp466. 4 residues coordinate Zn(2+): Cys816, Cys891, Cys898, and Cys901.

It belongs to the RNA polymerase beta' chain family. The RNAP catalytic core consists of 2 alpha, 1 beta, 1 beta' and 1 omega subunit. When a sigma factor is associated with the core the holoenzyme is formed, which can initiate transcription. Mg(2+) serves as cofactor. It depends on Zn(2+) as a cofactor.

The catalysed reaction is RNA(n) + a ribonucleoside 5'-triphosphate = RNA(n+1) + diphosphate. Its function is as follows. DNA-dependent RNA polymerase catalyzes the transcription of DNA into RNA using the four ribonucleoside triphosphates as substrates. This is DNA-directed RNA polymerase subunit beta' from Psychrobacter arcticus (strain DSM 17307 / VKM B-2377 / 273-4).